A 289-amino-acid polypeptide reads, in one-letter code: uncharacterized protein (289 aa).

This is an uncharacterized protein from Archaeoglobus fulgidus (strain ATCC 49558 / DSM 4304 / JCM 9628 / NBRC 100126 / VC-16).